The sequence spans 430 residues: Phosphoserine aminotransferase 1, chloroplastic (430 aa).

The transit peptide at 1 to 51 directs the protein to the chloroplast; the sequence is MAATTNSFLVGSNNTQIPALKPKSSSQSFLHLSKPNTVNFVSKTKPVAVRC. Position 52 is an N-acetylvaline (Val-52). Arg-111 lines the L-glutamate pocket. Pyridoxal 5'-phosphate is bound by residues 145–146, Trp-171, Thr-221, Asp-241, and Gln-264; that span reads AT. Lys-265 carries the post-translational modification N6-(pyridoxal phosphate)lysine. 306 to 307 is a binding site for pyridoxal 5'-phosphate; the sequence is NT.

The protein belongs to the class-V pyridoxal-phosphate-dependent aminotransferase family. SerC subfamily. As to quaternary structure, homodimer. The cofactor is pyridoxal 5'-phosphate. Ubiquitous, but expressed preferentially in light-grown roots and shoots. Detected in root meristems and in root tissues surrounding the vascular bundle.

It localises to the plastid. The protein localises to the chloroplast. The catalysed reaction is O-phospho-L-serine + 2-oxoglutarate = 3-phosphooxypyruvate + L-glutamate. It carries out the reaction 4-(phosphooxy)-L-threonine + 2-oxoglutarate = (R)-3-hydroxy-2-oxo-4-phosphooxybutanoate + L-glutamate. Its pathway is amino-acid biosynthesis; L-serine biosynthesis; L-serine from 3-phospho-D-glycerate: step 2/3. It participates in cofactor biosynthesis; pyridoxine 5'-phosphate biosynthesis; pyridoxine 5'-phosphate from D-erythrose 4-phosphate: step 3/5. Its activity is regulated as follows. Inhibited by high concentration of cysteine and by 3-phosphonooxypyruvate. Not inhibited by serine, threonine, valine, glycine, tryptophan and O-acetyl-L-serine. Functionally, involved in the plastidial phosphorylated pathway of serine biosynthesis (PPSB). Catalyzes the reversible conversion of 3-phosphohydroxypyruvate to phosphoserine. This Arabidopsis thaliana (Mouse-ear cress) protein is Phosphoserine aminotransferase 1, chloroplastic.